We begin with the raw amino-acid sequence, 1040 residues long: Multidrug resistance protein MdtB (1040 aa).

12 helical membrane passes run 25-45 (LLMA…PVAA), 347-367 (LMLA…NIPA), 369-389 (IIPG…MVFL), 396-416 (LTLM…IVVI), 440-460 (IGFT…PLLF), 472-492 (FAVT…TLTP), 537-557 (WLTL…WIVI), 863-883 (LGST…VLGV), 888-908 (FIHP…ALLA), 910-930 (IIAG…LIGI), 968-988 (ILMT…STGV), and 998-1018 (IAMV…TPVI).

This sequence belongs to the resistance-nodulation-cell division (RND) (TC 2.A.6) family. MdtB subfamily. Part of a tripartite efflux system composed of MdtA, MdtB and MdtC. MdtB forms a heteromultimer with MdtC.

The protein localises to the cell inner membrane. This Salmonella paratyphi B (strain ATCC BAA-1250 / SPB7) protein is Multidrug resistance protein MdtB.